A 126-amino-acid chain; its full sequence is Histone H2B type 1-K (126 aa).

A compositionally biased stretch (low complexity) spans 1–12 (MPEPAKSAPAPK). Residues 1–36 (MPEPAKSAPAPKKGSKKAVTKAQKKDGKKRKRSRKE) are disordered. Proline 2 bears the N-acetylproline mark. Position 3 is an ADP-ribosyl glutamic acid (glutamate 3). The residue at position 6 (lysine 6) is an N6-(2-hydroxyisobutyryl)lysine; alternate. Position 6 is an N6-(beta-hydroxybutyryl)lysine; alternate (lysine 6). Residue lysine 6 is modified to N6-acetyllysine; alternate. At lysine 6 the chain carries N6-butyryllysine; alternate. At lysine 6 the chain carries N6-crotonyllysine; alternate. Lysine 6 bears the N6-lactoyllysine; alternate mark. Lysine 6 participates in a covalent cross-link: Glycyl lysine isopeptide (Lys-Gly) (interchain with G-Cter in SUMO2); alternate. The residue at position 7 (serine 7) is an ADP-ribosylserine. Residue lysine 12 is modified to N6-(beta-hydroxybutyryl)lysine; alternate. 2 positions are modified to N6-acetyllysine; alternate: lysine 12 and lysine 13. An N6-crotonyllysine; alternate mark is found at lysine 12 and lysine 13. At lysine 12 the chain carries N6-lactoyllysine; alternate. Residue lysine 13 is modified to N6-(2-hydroxyisobutyryl)lysine; alternate. Position 15 is a phosphoserine; by STK4/MST1 (serine 15). Lysine 16, lysine 17, lysine 21, and lysine 24 each carry N6-acetyllysine; alternate. N6-crotonyllysine; alternate occurs at positions 16, 17, 21, and 24. 4 positions are modified to N6-lactoyllysine; alternate: lysine 16, lysine 17, lysine 21, and lysine 24. Lysine 17 is subject to N6-glutaryllysine; alternate. N6-(2-hydroxyisobutyryl)lysine; alternate occurs at positions 21 and 24. N6-(beta-hydroxybutyryl)lysine; alternate is present on lysine 21. Lysine 21 is subject to N6-butyryllysine; alternate. Lysine 21 participates in a covalent cross-link: Glycyl lysine isopeptide (Lys-Gly) (interchain with G-Cter in SUMO2); alternate. Lysine 25 is subject to N6-(2-hydroxyisobutyryl)lysine. An N6-(2-hydroxyisobutyryl)lysine; alternate modification is found at lysine 35. N6-(beta-hydroxybutyryl)lysine; alternate is present on lysine 35. Lysine 35 is subject to N6-crotonyllysine; alternate. The residue at position 35 (lysine 35) is an N6-glutaryllysine; alternate. The residue at position 35 (lysine 35) is an N6-succinyllysine; alternate. Lysine 35 is covalently cross-linked (Glycyl lysine isopeptide (Lys-Gly) (interchain with G-Cter in ubiquitin); alternate). Glutamate 36 bears the PolyADP-ribosyl glutamic acid mark. Serine 37 is modified (phosphoserine; by AMPK). Residues lysine 44, lysine 47, and lysine 58 each carry the N6-(2-hydroxyisobutyryl)lysine; alternate modification. N6-lactoyllysine; alternate is present on lysine 44. N6-glutaryllysine; alternate occurs at positions 44 and 47. Lysine 47 is modified (N6-methyllysine; alternate). Position 58 is an N6,N6-dimethyllysine; alternate (lysine 58). Position 80 is a dimethylated arginine (arginine 80). Lysine 86 carries the post-translational modification N6-(2-hydroxyisobutyryl)lysine; alternate. Lysine 86 is modified (N6-acetyllysine; alternate). Position 86 is an N6-lactoyllysine; alternate (lysine 86). Lysine 86 bears the N6,N6,N6-trimethyllysine; alternate mark. Residues arginine 87 and arginine 93 each carry the omega-N-methylarginine modification. The residue at position 109 (lysine 109) is an N6-(2-hydroxyisobutyryl)lysine; alternate. N6-(beta-hydroxybutyryl)lysine; alternate is present on lysine 109. The residue at position 109 (lysine 109) is an N6-lactoyllysine; alternate. At lysine 109 the chain carries N6-glutaryllysine; alternate. Lysine 109 is modified (N6-methyllysine; alternate). Serine 113 carries O-linked (GlcNAc) serine glycosylation. Threonine 116 bears the Phosphothreonine mark. Residues lysine 117 and lysine 121 each carry the N6-(2-hydroxyisobutyryl)lysine; alternate modification. Residue lysine 117 is modified to N6-(beta-hydroxybutyryl)lysine; alternate. N6-lactoyllysine; alternate occurs at positions 117 and 121. Lysine 117 and lysine 121 each carry N6-glutaryllysine; alternate. Residues lysine 117 and lysine 121 each carry the N6-succinyllysine; alternate modification. The residue at position 117 (lysine 117) is an N6-methylated lysine; alternate. Lysine 121 participates in a covalent cross-link: Glycyl lysine isopeptide (Lys-Gly) (interchain with G-Cter in ubiquitin); alternate.

It belongs to the histone H2B family. The nucleosome is a histone octamer containing two molecules each of H2A, H2B, H3 and H4 assembled in one H3-H4 heterotetramer and two H2A-H2B heterodimers. The octamer wraps approximately 147 bp of DNA. Monoubiquitination at Lys-35 (H2BK34Ub) by the MSL1/MSL2 dimer is required for histone H3 'Lys-4' (H3K4me) and 'Lys-79' (H3K79me) methylation and transcription activation at specific gene loci, such as HOXA9 and MEIS1 loci. Similarly, monoubiquitination at Lys-121 (H2BK120Ub) by the RNF20/40 complex gives a specific tag for epigenetic transcriptional activation and is also prerequisite for histone H3 'Lys-4' and 'Lys-79' methylation. It also functions cooperatively with the FACT dimer to stimulate elongation by RNA polymerase II. H2BK120Ub also acts as a regulator of mRNA splicing: deubiquitination by USP49 is required for efficient cotranscriptional splicing of a large set of exons. In terms of processing, phosphorylated on Ser-15 (H2BS14ph) by STK4/MST1 during apoptosis; which facilitates apoptotic chromatin condensation. Also phosphorylated on Ser-15 in response to DNA double strand breaks (DSBs), and in correlation with somatic hypermutation and immunoglobulin class-switch recombination. Phosphorylation at Ser-37 (H2BS36ph) by AMPK in response to stress promotes transcription. Post-translationally, glcNAcylation at Ser-113 promotes monoubiquitination of Lys-121. It fluctuates in response to extracellular glucose, and associates with transcribed genes. ADP-ribosylated by PARP1 or PARP2 on Ser-7 (H2BS6ADPr) in response to DNA damage. H2BS6ADPr promotes recruitment of CHD1L. Mono-ADP-ribosylated on Glu-3 (H2BE2ADPr) by PARP3 in response to single-strand breaks. Poly ADP-ribosylation on Glu-36 (H2BE35ADPr) by PARP1 regulates adipogenesis: it inhibits phosphorylation at Ser-37 (H2BS36ph), thereby blocking expression of pro-adipogenetic genes. In terms of processing, crotonylation (Kcr) is specifically present in male germ cells and marks testis-specific genes in post-meiotic cells, including X-linked genes that escape sex chromosome inactivation in haploid cells. Crotonylation marks active promoters and enhancers and confers resistance to transcriptional repressors. It is also associated with post-meiotically activated genes on autosomes. Post-translationally, hydroxybutyrylation of histones is induced by starvation. Lactylated in macrophages by EP300/P300 by using lactoyl-CoA directly derived from endogenous or exogenous lactate, leading to stimulates gene transcription.

It is found in the nucleus. The protein resides in the chromosome. Functionally, core component of nucleosome. Nucleosomes wrap and compact DNA into chromatin, limiting DNA accessibility to the cellular machineries which require DNA as a template. Histones thereby play a central role in transcription regulation, DNA repair, DNA replication and chromosomal stability. DNA accessibility is regulated via a complex set of post-translational modifications of histones, also called histone code, and nucleosome remodeling. The chain is Histone H2B type 1-K from Mus musculus (Mouse).